A 722-amino-acid polypeptide reads, in one-letter code: Zinc finger protein 600 (722 aa).

The C2H2-type 1; degenerate zinc finger occupies 162-184 (FQCNESGKAFNCSSLLRKHQIPH). 9 consecutive C2H2-type zinc fingers follow at residues 190–212 (YKCD…CRCH), 218–240 (YKCN…RRLH), 246–268 (HKCN…KAIH), 274–296 (YKCN…RRIH), 302–324 (YKCE…KRIH), 330–352 (YKCK…KRIH), 358–380 (YKCN…HRLH), 386–408 (YKCK…TRIH), and 414–436 (YKCN…KSIH). Residues 442 to 464 (YKYEECEKVFSCGSTLETHKIIH) form a C2H2-type 11; degenerate zinc finger. C2H2-type zinc fingers lie at residues 470–492 (YKCK…TRIH), 498–520 (YKCN…RRVH), 526–548 (YKCN…RRLH), 554–576 (YKCN…RRLH), 582–604 (YKCT…TRIH), 610–632 (YKCN…HRIH), 638–660 (YKCE…RRIH), 666–688 (YKCK…TGLH), and 694–716 (YKCN…QAVH).

This sequence belongs to the krueppel C2H2-type zinc-finger protein family.

Its subcellular location is the nucleus. May be involved in transcriptional regulation. The chain is Zinc finger protein 600 (ZNF600) from Homo sapiens (Human).